A 393-amino-acid polypeptide reads, in one-letter code: tRNA(Met) cytidine acetate ligase (393 aa).

Positions 81, 142, and 167 each coordinate ATP.

The protein belongs to the TmcAL family.

Its subcellular location is the cytoplasm. The enzyme catalyses cytidine(34) in elongator tRNA(Met) + acetate + ATP = N(4)-acetylcytidine(34) in elongator tRNA(Met) + AMP + diphosphate. Catalyzes the formation of N(4)-acetylcytidine (ac(4)C) at the wobble position of elongator tRNA(Met), using acetate and ATP as substrates. First activates an acetate ion to form acetyladenylate (Ac-AMP) and then transfers the acetyl group to tRNA to form ac(4)C34. In Bacillus thuringiensis subsp. konkukian (strain 97-27), this protein is tRNA(Met) cytidine acetate ligase.